The primary structure comprises 669 residues: MWTLAGQGWWRGRALAAWVTEAARKGLLWPHLAPARGTAAESRAPDRCYSSADRKEKIDMSCFPVENTRNFSIIAHVDHGKSTLADRLLELTGAIDKTKNNKQVLDKLQVERERGITVKAQTASLFYNYEGKQYLLNLIDTPGHVDFSYEVSRSLSACQGVLLVVDANEGIQAQTVANFFLAFEAQLSIIPVINKIDLKNADPERVEKQIEKVFDIPGDECIKISAKLGTNVESVLDAVIKRIPFPKAHCRNPLRALVFDSTFDQYRGVIANVALFDGVVSKGDKIVSAHTQKTYEVNEVGVLNPNEQPTHKLYAGQVGYLIAGMKDVTEAQIGDTLYLHKQPVEPLPGFKSAKPMVFAGMYPVDQSEYNNLKSAIEKLTLNDSSVVVHRDSSLALGAGWRLGFLGLLHMEVFNQRLEQEYNASVILTTPTVPYKAVLSSAKLIKEYREKEITIINPAQFPDKSKVTEYLEPVVLGTIITPDEYTGKIMMLCQARRAVQKNMMYIDQNRVMLKYLFPLNEIVVDFYDSLKSLSSGYASFDYEDAGYQTAELVKMDILLNGSIVEELVTVVHKDKAYSVGKAICERLKDSLPRQLFEIAIQAALGSKIIARETVKAYRKNVLAKCYGGDITRKMKLLKRQAEGKKKLRKVGNVEVPKDAFIKVLKTQSDK.

A mitochondrion-targeting transit peptide spans Met1–Tyr49. Positions Glu66 to Lys247 constitute a tr-type G domain. GTP contacts are provided by residues Ala75–Ser82, Asp140–His144, and Asn194–Asp197.

This sequence belongs to the TRAFAC class translation factor GTPase superfamily. Classic translation factor GTPase family. LepA subfamily.

Its subcellular location is the mitochondrion inner membrane. The catalysed reaction is GTP + H2O = GDP + phosphate + H(+). Promotes mitochondrial protein synthesis. May act as a fidelity factor of the translation reaction, by catalyzing a one-codon backward translocation of tRNAs on improperly translocated ribosomes. Binds to mitochondrial ribosomes in a GTP-dependent manner. This chain is Translation factor GUF1, mitochondrial, found in Bos taurus (Bovine).